The primary structure comprises 165 residues: Endoribonuclease YbeY (165 aa).

Residues His-130, His-134, and His-140 each contribute to the Zn(2+) site.

This sequence belongs to the endoribonuclease YbeY family. Requires Zn(2+) as cofactor.

It is found in the cytoplasm. In terms of biological role, single strand-specific metallo-endoribonuclease involved in late-stage 70S ribosome quality control and in maturation of the 3' terminus of the 16S rRNA. This chain is Endoribonuclease YbeY, found in Streptococcus gordonii (strain Challis / ATCC 35105 / BCRC 15272 / CH1 / DL1 / V288).